Consider the following 436-residue polypeptide: Mannitol-binding protein (436 aa).

Positions 1 to 22 are cleaved as a signal peptide; sequence MNDSIKACLAAACLALPLLAQG.

This sequence belongs to the bacterial solute-binding protein 1 family.

It localises to the periplasm. In terms of biological role, binds mannitol with high affinity. The sequence is that of Mannitol-binding protein from Pseudomonas aeruginosa (strain ATCC 15692 / DSM 22644 / CIP 104116 / JCM 14847 / LMG 12228 / 1C / PRS 101 / PAO1).